A 329-amino-acid chain; its full sequence is Isopenicillin N synthase (329 aa).

The isopenicillin N site is built by R87, Y91, and Y189. R87, Y91, Y189, H212, and D214 together coordinate N-[(5S)-5-amino-5-carboxypentanoyl]-L-cysteinyl-D-valine. Residues 180–286 (TLSAVTLIHY…RLSLPFFLHA (107 aa)) enclose the Fe2OG dioxygenase domain. Fe(2+) contacts are provided by H212, D214, and H268. R277 serves as a coordination point for 2-oxoglutarate. S279 is an isopenicillin N binding site. S279 provides a ligand contact to N-[(5S)-5-amino-5-carboxypentanoyl]-L-cysteinyl-D-valine.

The protein belongs to the iron/ascorbate-dependent oxidoreductase family. Requires Fe cation as cofactor. L-ascorbate serves as cofactor.

It carries out the reaction N-[(5S)-5-amino-5-carboxypentanoyl]-L-cysteinyl-D-valine + O2 = isopenicillin N + 2 H2O. It functions in the pathway antibiotic biosynthesis; penicillin G biosynthesis; penicillin G from L-alpha-aminoadipate and L-cysteine and L-valine: step 2/3. Functionally, removes, in the presence of oxygen, 4 hydrogen atoms from delta-L-(alpha-aminoadipyl)-L-cysteinyl-D-valine (ACV) to form the azetidinone and thiazolidine rings of isopenicillin. The chain is Isopenicillin N synthase (pcbC) from Streptomyces griseus.